A 492-amino-acid chain; its full sequence is 2,3-bisphosphoglycerate-independent phosphoglycerate mutase (492 aa).

Residues D11 and S61 each contribute to the Mn(2+) site. S61 serves as the catalytic Phosphoserine intermediate. Substrate is bound by residues H118, 147–148, R178, R184, 248–251, and K320; these read RD and RNDR. The Mn(2+) site is built by D386, H390, D427, H428, and H445.

This sequence belongs to the BPG-independent phosphoglycerate mutase family. As to quaternary structure, monomer. It depends on Mn(2+) as a cofactor.

It carries out the reaction (2R)-2-phosphoglycerate = (2R)-3-phosphoglycerate. Its pathway is carbohydrate degradation; glycolysis; pyruvate from D-glyceraldehyde 3-phosphate: step 3/5. Its function is as follows. Catalyzes the interconversion of 2-phosphoglycerate and 3-phosphoglycerate. This Campylobacter jejuni subsp. jejuni serotype O:6 (strain 81116 / NCTC 11828) protein is 2,3-bisphosphoglycerate-independent phosphoglycerate mutase.